The sequence spans 352 residues: Chymopapain (352 aa).

Residues 1 to 18 (MATMSSISKIIFLATCLI) form the signal peptide. Residues 19-134 (IHMGLSSADF…EDFTYKHVTN (116 aa)) constitute a propeptide, activation peptide. N-linked (GlcNAc...) asparagine glycosylation is present at N86. Disulfide bonds link C156–C197, C190–C229, and C287–C338. Residue C159 is part of the active site. Catalysis depends on residues H293 and N313.

The protein belongs to the peptidase C1 family.

The enzyme catalyses Specificity similar to that of papain.. Functionally, cysteine proteinase with a high level of diversity in substrate specificity. This Carica papaya (Papaya) protein is Chymopapain.